A 552-amino-acid chain; its full sequence is MFS-type transporter atr4 (552 aa).

The disordered stretch occupies residues 1-102; it reads MEDPKSLSAP…NIVDWDGPND (102 aa). The segment covering 16-27 has biased composition (low complexity); it reads ADTTTADETPAA. 2 stretches are compositionally biased toward polar residues: residues 38–47 and 71–80; these read KAGSESSENT and LRNSSVSRSN. N-linked (GlcNAc...) asparagine glycosylation occurs at Asn73. The next 6 helical transmembrane spans lie at 118–138, 153–173, 182–202, 214–234, 244–264, and 272–292; these read IFLVSSITFISPLGSSILATG, LGSLVVSVYLLGFAAGPLVIA, MPLYHICNILFAILTVGCALG, LQGCAGSAPLAIGGGTISDLI, GIYALGPTLGPIFGPVAGGFL, and WLMWLLLMIEGSVTLVNFVVM. N-linked (GlcNAc...) asparagine glycosylation is present at Asn314. The next 6 helical transmembrane spans lie at 346–366, 385–405, 425–445, 452–472, 498–518, and 521–541; these read PIIFLLSLFMAMVYGYLYLLF, GLVYLGLGIGNIIGLVIFGVF, LLPMVWTSFTVPIGLFIYGWS, WIVPIIGTVFFGIGLLVTLVC, VVGATLPLAGPSMYQALGIGW, and SLLAFIALAGCPIPWVFYVYG.

This sequence belongs to the major facilitator superfamily.

It is found in the cell membrane. In terms of biological role, MFS-type transporter; part of the gene cluster that mediates the biosynthesis of atranorin, a depside of polyketide origin that accumulates in the cortical or medullary layers of lichen thalli. In Stereocaulon alpinum (Alpine snow lichen), this protein is MFS-type transporter atr4.